A 362-amino-acid polypeptide reads, in one-letter code: Phosphoserine aminotransferase (362 aa).

Arg43 contributes to the L-glutamate binding site. Pyridoxal 5'-phosphate-binding positions include 77–78 (AT), Trp103, Thr153, Asp173, and Gln196. Lys197 bears the N6-(pyridoxal phosphate)lysine mark. 238–239 (NT) serves as a coordination point for pyridoxal 5'-phosphate.

The protein belongs to the class-V pyridoxal-phosphate-dependent aminotransferase family. SerC subfamily. In terms of assembly, homodimer. Pyridoxal 5'-phosphate is required as a cofactor.

It localises to the cytoplasm. It carries out the reaction O-phospho-L-serine + 2-oxoglutarate = 3-phosphooxypyruvate + L-glutamate. It catalyses the reaction 4-(phosphooxy)-L-threonine + 2-oxoglutarate = (R)-3-hydroxy-2-oxo-4-phosphooxybutanoate + L-glutamate. It participates in amino-acid biosynthesis; L-serine biosynthesis; L-serine from 3-phospho-D-glycerate: step 2/3. It functions in the pathway cofactor biosynthesis; pyridoxine 5'-phosphate biosynthesis; pyridoxine 5'-phosphate from D-erythrose 4-phosphate: step 3/5. In terms of biological role, catalyzes the reversible conversion of 3-phosphohydroxypyruvate to phosphoserine and of 3-hydroxy-2-oxo-4-phosphonooxybutanoate to phosphohydroxythreonine. This chain is Phosphoserine aminotransferase, found in Xylella fastidiosa (strain 9a5c).